Here is an 88-residue protein sequence, read N- to C-terminus: uncharacterized protein (88 aa).

This is an uncharacterized protein from Acidianus convivator (ABV).